A 463-amino-acid chain; its full sequence is Methionine aminopeptidase 2-2 (463 aa).

Positions 1 to 97 are disordered; sequence MGSKSPEGHW…TLSVTELKQT (97 aa). Residues 27–36 are compositionally biased toward polar residues; that stretch reads DPQTSQNGSG. Residues 46–57 show a composition bias toward acidic residues; that stretch reads GDDDDDDEDAEE. The span at 69–85 shows a compositional bias: basic residues; that stretch reads KKKKRKKSNKKKKKKTK. The segment covering 86-97 has biased composition (polar residues); the sequence is SGTLSVTELKQT. H215 provides a ligand contact to substrate. A divalent metal cation is bound by residues D236, D247, and H316. Substrate is bound at residue H324. The a divalent metal cation site is built by E349 and E444.

The protein belongs to the peptidase M24A family. Methionine aminopeptidase eukaryotic type 2 subfamily. Co(2+) is required as a cofactor. The cofactor is Zn(2+). It depends on Mn(2+) as a cofactor. Fe(2+) serves as cofactor.

It localises to the cytoplasm. The enzyme catalyses Release of N-terminal amino acids, preferentially methionine, from peptides and arylamides.. Its function is as follows. Cotranslationally removes the N-terminal methionine from nascent proteins. The N-terminal methionine is often cleaved when the second residue in the primary sequence is small and uncharged (Met-Ala-, Cys, Gly, Pro, Ser, Thr, or Val). The chain is Methionine aminopeptidase 2-2 from Neosartorya fischeri (strain ATCC 1020 / DSM 3700 / CBS 544.65 / FGSC A1164 / JCM 1740 / NRRL 181 / WB 181) (Aspergillus fischerianus).